The primary structure comprises 279 residues: tRNA uridine(34) hydroxylase (279 aa).

The region spanning 126–221 (TKPGMHVIDT…YLQSVKGADS (96 aa)) is the Rhodanese domain. Residue cysteine 181 is the Cysteine persulfide intermediate of the active site.

This sequence belongs to the TrhO family.

It carries out the reaction uridine(34) in tRNA + AH2 + O2 = 5-hydroxyuridine(34) in tRNA + A + H2O. Its function is as follows. Catalyzes oxygen-dependent 5-hydroxyuridine (ho5U) modification at position 34 in tRNAs. This is tRNA uridine(34) hydroxylase from Anaplasma phagocytophilum (strain HZ).